A 621-amino-acid chain; its full sequence is ATP-dependent DNA helicase Q1 (621 aa).

Residues 100–275 (VNATMARKDI…QKILCVEKCL (176 aa)) enclose the Helicase ATP-binding domain. 113–120 (MPTGGGKS) lines the ATP pocket. Residues 219–222 (DEVH) carry the DEVH box motif. In terms of domain architecture, Helicase C-terminal spans 296–451 (SAEDFIENIA…EMVSYCQNIS (156 aa)). Residues Cys453, Cys471, Cys475, and Cys478 each contribute to the Zn(2+) site. An N6-acetyllysine mark is found at Lys514 and Lys522. 2 positions are modified to phosphoserine: Ser597 and Ser602.

This sequence belongs to the helicase family. RecQ subfamily. May form homodimers or higher order oligomers. Interacts with EXO1. Interacts with MLH1. Interacts with PARP1. Requires Mg(2+) as cofactor. The cofactor is Mn(2+). It depends on Zn(2+) as a cofactor.

It localises to the nucleus. The enzyme catalyses Couples ATP hydrolysis with the unwinding of duplex DNA by translocating in the 3'-5' direction.. It carries out the reaction ATP + H2O = ADP + phosphate + H(+). The catalysed reaction is dATP + H2O = dADP + phosphate + H(+). In terms of biological role, DNA helicase that plays a role in DNA damage repair and genome stability. Exhibits a magnesium- and ATP-dependent DNA-helicase activity that unwinds single- and double-stranded DNA in a 3'-5' direction. Plays a role in restoring regressed replication forks. Required to restart stalled replication forks induced by abortive topoisomerase 1 and 2 lesions. May play a role in the repair of DNA that is damaged by ultraviolet light or other mutagens. The polypeptide is ATP-dependent DNA helicase Q1 (Recql) (Rattus norvegicus (Rat)).